Consider the following 167-residue polypeptide: MIIFKDVISNDEMCSDAFEPKVVDNVVYEVDCTMIQVAEGDVDIGANPSAEDAEEGVDSDVQTVNNVVHSFRLQSTGFDKKSYLTYLKGYMKSIKNYLAENKPEEVENFEKGAQAYAKKIVANFKDFDFYTGESMDPDGMVALLNYREDGTTPYLIFWKHGIKEEKI.

The TCTP domain occupies 1–167; the sequence is MIIFKDVISN…WKHGIKEEKI (167 aa).

It belongs to the TCTP family.

Its subcellular location is the cytoplasm. It is found in the cytoskeleton. Its function is as follows. Involved in protein synthesis. Involved in microtubule stabilization. This chain is Translationally-controlled tumor protein homolog, found in Yarrowia lipolytica (strain CLIB 122 / E 150) (Yeast).